The primary structure comprises 310 residues: MSKKIINEVIDILEDKKYTYTMIEYPEHNRKSVDIVLNSKEPTLIRVSEDKVTKEEISDLKKIAVSTLTASLVVTNEEEEDIVSVKADNVFAVSPEGFKKVINGEKIFLYRTRGGIFIKIRNYILKHKREEMGYSIGDVAKFLGVSRKAIYDYEKGDSDVSLEVAEKLIDLFGDDIIGDVIWDSIKGKKEVIEEDITEFSPESFKSKLIYKLKENGLNILSLKLTAADLIVKDNENNRYLVTIENKDYNKSMKKFYEAKKLASYTKSELLIIIRTSKMLKECEDLGYKTYEENDIHSLIDEIKGSNGRQS.

The HTH cro/C1-type domain maps to 125–180; sequence LKHKREEMGYSIGDVAKFLGVSRKAIYDYEKGDSDVSLEVAEKLIDLFGDDIIGDV. Positions 136 to 155 form a DNA-binding region, H-T-H motif; the sequence is IGDVAKFLGVSRKAIYDYEK.

This Saccharolobus islandicus (strain M.14.25 / Kamchatka #1) (Sulfolobus islandicus) protein is Putative HTH-type transcriptional regulatory protein M1425_1284.